The sequence spans 161 residues: Nucleotide-binding protein Daci_4781 (161 aa).

This sequence belongs to the YajQ family.

Its function is as follows. Nucleotide-binding protein. In Delftia acidovorans (strain DSM 14801 / SPH-1), this protein is Nucleotide-binding protein Daci_4781.